Consider the following 287-residue polypeptide: Large ribosomal subunit protein uL2 (287 aa).

The disordered stretch occupies residues 221 to 287 (RGSVMNPCDH…SKRSRGGRDS (67 aa)). Basic residues predominate over residues 258 to 287 (KTRKRNKPSNKFVLRKRRKTSKRSRGGRDS).

It belongs to the universal ribosomal protein uL2 family. Part of the 50S ribosomal subunit. Forms a bridge to the 30S subunit in the 70S ribosome.

In terms of biological role, one of the primary rRNA binding proteins. Required for association of the 30S and 50S subunits to form the 70S ribosome, for tRNA binding and peptide bond formation. It has been suggested to have peptidyltransferase activity; this is somewhat controversial. Makes several contacts with the 16S rRNA in the 70S ribosome. The protein is Large ribosomal subunit protein uL2 of Synechococcus sp. (strain RCC307).